A 538-amino-acid polypeptide reads, in one-letter code: Phosphoenolpyruvate carboxykinase (ATP) (538 aa).

Substrate is bound at residue Arg-64. Ca(2+) is bound by residues Asn-149 and Phe-151. Substrate contacts are provided by Tyr-206 and Lys-212. ATP contacts are provided by residues Lys-212, His-231, and 247–255 (GLSGTGKTT). The Mn(2+) site is built by Lys-212 and His-231. Residue Asp-268 participates in Mn(2+) binding. Residues Glu-296, Arg-332, 447 to 448 (RI), and Thr-453 contribute to the ATP site. Arg-332 is a binding site for substrate.

It belongs to the phosphoenolpyruvate carboxykinase (ATP) family. Monomer. Requires Mn(2+) as cofactor.

It is found in the cytoplasm. The catalysed reaction is oxaloacetate + ATP = phosphoenolpyruvate + ADP + CO2. It participates in carbohydrate biosynthesis; gluconeogenesis. Allosterically activated by calcium. In terms of biological role, involved in the gluconeogenesis. Catalyzes the conversion of oxaloacetate (OAA) to phosphoenolpyruvate (PEP) through direct phosphoryl transfer between the nucleoside triphosphate and OAA. This Salmonella typhimurium (strain LT2 / SGSC1412 / ATCC 700720) protein is Phosphoenolpyruvate carboxykinase (ATP).